Here is a 98-residue protein sequence, read N- to C-terminus: NADH-ubiquinone oxidoreductase chain 4L (98 aa).

The next 3 membrane-spanning stretches (helical) occupy residues Met-1–Ile-21, Leu-26–Leu-46, and Ala-59–Val-79.

It belongs to the complex I subunit 4L family. Core subunit of respiratory chain NADH dehydrogenase (Complex I) which is composed of 45 different subunits.

It is found in the mitochondrion inner membrane. It catalyses the reaction a ubiquinone + NADH + 5 H(+)(in) = a ubiquinol + NAD(+) + 4 H(+)(out). Core subunit of the mitochondrial membrane respiratory chain NADH dehydrogenase (Complex I) which catalyzes electron transfer from NADH through the respiratory chain, using ubiquinone as an electron acceptor. Part of the enzyme membrane arm which is embedded in the lipid bilayer and involved in proton translocation. This Caenolestes fuliginosus (Shrew opossum) protein is NADH-ubiquinone oxidoreductase chain 4L (MT-ND4L).